We begin with the raw amino-acid sequence, 408 residues long: LL-diaminopimelate aminotransferase (408 aa).

Residues Tyr-15 and Gly-42 each coordinate substrate. Pyridoxal 5'-phosphate contacts are provided by residues Tyr-72, 108 to 109 (SK), Tyr-132, Asn-187, Tyr-218, and 246 to 248 (SFS). Lys-109, Tyr-132, and Asn-187 together coordinate substrate. Lys-249 carries the post-translational modification N6-(pyridoxal phosphate)lysine. Residues Arg-257 and Asn-292 each coordinate pyridoxal 5'-phosphate. Asn-292 and Arg-388 together coordinate substrate.

This sequence belongs to the class-I pyridoxal-phosphate-dependent aminotransferase family. LL-diaminopimelate aminotransferase subfamily. In terms of assembly, homodimer. The cofactor is pyridoxal 5'-phosphate.

The catalysed reaction is (2S,6S)-2,6-diaminopimelate + 2-oxoglutarate = (S)-2,3,4,5-tetrahydrodipicolinate + L-glutamate + H2O + H(+). It functions in the pathway amino-acid biosynthesis; L-lysine biosynthesis via DAP pathway; LL-2,6-diaminopimelate from (S)-tetrahydrodipicolinate (aminotransferase route): step 1/1. Functionally, involved in the synthesis of meso-diaminopimelate (m-DAP or DL-DAP), required for both lysine and peptidoglycan biosynthesis. Catalyzes the direct conversion of tetrahydrodipicolinate to LL-diaminopimelate. In Synechococcus sp. (strain RCC307), this protein is LL-diaminopimelate aminotransferase.